Consider the following 312-residue polypeptide: Olfactory receptor 1D2 (312 aa).

The Extracellular portion of the chain corresponds to Met-1–Arg-25. The N-linked (GlcNAc...) asparagine glycan is linked to Asn-5. A helical transmembrane segment spans residues Ile-26–Ile-49. Over Ser-50 to Thr-57 the chain is Cytoplasmic. A helical membrane pass occupies residues Pro-58–Pro-79. The Extracellular segment spans residues Lys-80–Gln-100. Cys-97 and Cys-189 form a disulfide bridge. A helical membrane pass occupies residues Leu-101 to Tyr-120. Over Asp-121–Lys-139 the chain is Cytoplasmic. A helical membrane pass occupies residues Leu-140–Ile-158. Residues His-159 to His-196 lie on the Extracellular side of the membrane. Residue Asn-195 is glycosylated (N-linked (GlcNAc...) asparagine). A helical transmembrane segment spans residues Thr-197–Val-219. Topologically, residues Leu-220–Lys-236 are cytoplasmic. The chain crosses the membrane as a helical span at residues Ala-237–Tyr-259. Topologically, residues Leu-260–Ser-271 are extracellular. Residues Val-272 to Leu-291 traverse the membrane as a helical segment. At Arg-292–Thr-312 the chain is on the cytoplasmic side.

Belongs to the G-protein coupled receptor 1 family.

It localises to the cell membrane. Its function is as follows. Odorant receptor. In Pan troglodytes (Chimpanzee), this protein is Olfactory receptor 1D2 (OR1D2).